The following is a 431-amino-acid chain: Probable oxidoreductase OrdL (431 aa).

This chain is Probable oxidoreductase OrdL (ordL), found in Haemophilus influenzae (strain ATCC 51907 / DSM 11121 / KW20 / Rd).